Consider the following 164-residue polypeptide: Methanogen homoaconitase small subunit 2 (164 aa).

Residues Tyr-26 to Thr-29 carry the YLRT motif.

Belongs to the LeuD family. LeuD type 2 subfamily. As to quaternary structure, heterotetramer of 2 HacA and 2 HacB proteins. Cannot form a complex with LeuC.

It catalyses the reaction (2R)-homocitrate = (2R,3S)-homoisocitrate. It carries out the reaction (2R)-homocitrate = cis-homoaconitate + H2O. The enzyme catalyses (2R,3S)-homoisocitrate = cis-homoaconitate + H2O. The catalysed reaction is cis-(homo)2aconitate + H2O = (2R,3S)-iso(homo)2citrate. It catalyses the reaction cis-(homo)3aconitate + H2O = (2R,3S)-iso(homo)3citrate. Its pathway is organic acid metabolism; 2-oxosuberate biosynthesis. In terms of biological role, component of a hydro-lyase with broad substrate specificity for cis-unsaturated tricarboxylic acids. Catalyzes both the reversible dehydration of (R)-homocitrate ((R)-2-hydroxybutane-1,2,4-tricarboxylate) to produce cis-homoaconitate ((Z)-but-1-ene-1,2,4-tricarboxylate), and its hydration to homoisocitrate ((1R,2S)-1-hydroxybutane-1,2,4-tricarboxylate). Is also able to hydrate the analogous longer chain substrates cis-homo(2)-aconitate, cis-homo(3)-aconitate. These reactions are part of the biosynthesis pathway of coenzyme B. This Methanosarcina acetivorans (strain ATCC 35395 / DSM 2834 / JCM 12185 / C2A) protein is Methanogen homoaconitase small subunit 2 (hacB2).